The primary structure comprises 216 residues: Protein-L-isoaspartate O-methyltransferase (216 aa).

The active site involves Ser-64.

Belongs to the methyltransferase superfamily. L-isoaspartyl/D-aspartyl protein methyltransferase family.

It is found in the cytoplasm. The catalysed reaction is [protein]-L-isoaspartate + S-adenosyl-L-methionine = [protein]-L-isoaspartate alpha-methyl ester + S-adenosyl-L-homocysteine. Catalyzes the methyl esterification of L-isoaspartyl residues in peptides and proteins that result from spontaneous decomposition of normal L-aspartyl and L-asparaginyl residues. It plays a role in the repair and/or degradation of damaged proteins. The sequence is that of Protein-L-isoaspartate O-methyltransferase from Paracoccus denitrificans (strain Pd 1222).